The chain runs to 584 residues: Phenylalanine--tRNA ligase beta subunit (584 aa).

One can recognise a B5 domain in the interval 290-369; the sequence is FSVRTKTVTH…RALGFNSLEP (80 aa). Asp347, Asp353, Asp356, and Asp357 together coordinate Mg(2+).

This sequence belongs to the phenylalanyl-tRNA synthetase beta subunit family. Type 2 subfamily. As to quaternary structure, tetramer of two alpha and two beta subunits. It depends on Mg(2+) as a cofactor.

The protein localises to the cytoplasm. It catalyses the reaction tRNA(Phe) + L-phenylalanine + ATP = L-phenylalanyl-tRNA(Phe) + AMP + diphosphate + H(+). In Haloarcula marismortui (strain ATCC 43049 / DSM 3752 / JCM 8966 / VKM B-1809) (Halobacterium marismortui), this protein is Phenylalanine--tRNA ligase beta subunit.